The chain runs to 967 residues: Siderophore exporter MmpL4 (967 aa).

11 helical membrane passes run 26–46 (AFAV…TVFV), 210–230 (VIFI…LLLI), 242–262 (VVAV…VSLL), 303–323 (AHVI…LSFA), 333–353 (IPCA…GPAV), 384–404 (WPLP…LALP), 769–789 (WDLL…MLII), 793–813 (FIAA…SFGL), 821–841 (ILAI…LLAV), 875–895 (VVTN…VSDL), and 913–934 (TLIV…WFWW). Positions 943–967 (ARTPTVPSETQPAGRPLAMSSDRLG) are disordered.

It belongs to the resistance-nodulation-cell division (RND) (TC 2.A.6) family. MmpL subfamily. As to quaternary structure, interacts with MmpS4.

Its subcellular location is the cell inner membrane. Part of an export system, which is required for biosynthesis and secretion of siderophores. The sequence is that of Siderophore exporter MmpL4 (mmpL4) from Mycobacterium tuberculosis (strain CDC 1551 / Oshkosh).